The following is a 267-amino-acid chain: Transcription factor HES-1-A (267 aa).

The tract at residues 1–43 is disordered; that stretch reads MPADVMEKNSSSPVAATPASVSNTPDKPKTASEHRKSSKPIME. A compositionally biased stretch (low complexity) spans 10 to 22; that stretch reads SSSPVAATPASVS. The segment covering 26-35 has biased composition (basic and acidic residues); that stretch reads DKPKTASEHR. The 58-residue stretch at 34-91 folds into the bHLH domain; sequence HRKSSKPIMEKRRRARINESLGQLKTLILDALKKDSSRHSKLEKADILEMTVKHLRNL. In terms of domain architecture, Orange spans 110–143; the sequence is YRAGFSECMNEVTRFLSTCEGVNTDVRTRLLGHL. A WRPW motif motif is present at residues 264 to 267; the sequence is WRPW.

Transcription repression requires formation of a complex with a corepressor protein of the Groucho/TLE family. Interacts with the bHLH protein hes2, and binds DNA in the form of a heterodimer with the bHLH protein hey1/hrt1. Interacts with the bHLH protein hes6; this interaction may inhibit the transcriptional repressor activity. As to expression, starting from late neurula stage, weakly expressed in midline neural cells, where expression is restricted to the superficial layer of the prospective floorplate. Expressed in the posterior somitic mesoderm (PSM) at tailbud stage. During early tailbud stages, broadly expressed within the pronephric mesoderm both around and inside the developing pronephros. During late tailbud to early tadpole stages, expressed more ventrally in the pronephros, and although initially expressed in both the lateral and medial layers, by these later stages expression is predominantly in the lateral layer. Pronephric expression is no longer detectable in late tadpoles (stage 35).

It is found in the nucleus. Functionally, transcriptional repressor of a subset of early mesodermal genes including myod1 and t/bra. Binds DNA on N-box motifs: 5'-CACNAG-3'. Acts as a negative regulator of myogenesis, mediating Notch signaling to repress expression of myod1. In Xenopus laevis (African clawed frog), this protein is Transcription factor HES-1-A (hes1-a).